The chain runs to 215 residues: Glycerol-3-phosphate acyltransferase (215 aa).

The next 5 membrane-spanning stretches (helical) occupy residues 14 to 34 (SSSA…AVVV), 63 to 83 (TAAA…LWLA), 92 to 112 (WGAY…PLFL), 128 to 148 (MAIE…VAVF), and 154 to 174 (LAAL…SGAA).

The protein belongs to the PlsY family. As to quaternary structure, probably interacts with PlsX.

The protein localises to the cell inner membrane. It carries out the reaction an acyl phosphate + sn-glycerol 3-phosphate = a 1-acyl-sn-glycero-3-phosphate + phosphate. Its pathway is lipid metabolism; phospholipid metabolism. In terms of biological role, catalyzes the transfer of an acyl group from acyl-phosphate (acyl-PO(4)) to glycerol-3-phosphate (G3P) to form lysophosphatidic acid (LPA). This enzyme utilizes acyl-phosphate as fatty acyl donor, but not acyl-CoA or acyl-ACP. This is Glycerol-3-phosphate acyltransferase from Bordetella bronchiseptica (strain ATCC BAA-588 / NCTC 13252 / RB50) (Alcaligenes bronchisepticus).